The following is a 349-amino-acid chain: Biotin synthase (349 aa).

A Radical SAM core domain is found at 60 to 287; sequence GDVELATLLS…KARVRLSAGR (228 aa). [4Fe-4S] cluster is bound by residues C75, C79, and C82. 4 residues coordinate [2Fe-2S] cluster: C119, C150, C210, and R282.

This sequence belongs to the radical SAM superfamily. Biotin synthase family. In terms of assembly, homodimer. Requires [4Fe-4S] cluster as cofactor. [2Fe-2S] cluster serves as cofactor.

It carries out the reaction (4R,5S)-dethiobiotin + (sulfur carrier)-SH + 2 reduced [2Fe-2S]-[ferredoxin] + 2 S-adenosyl-L-methionine = (sulfur carrier)-H + biotin + 2 5'-deoxyadenosine + 2 L-methionine + 2 oxidized [2Fe-2S]-[ferredoxin]. It functions in the pathway cofactor biosynthesis; biotin biosynthesis; biotin from 7,8-diaminononanoate: step 2/2. Functionally, catalyzes the conversion of dethiobiotin (DTB) to biotin by the insertion of a sulfur atom into dethiobiotin via a radical-based mechanism. This chain is Biotin synthase, found in Albidiferax ferrireducens (strain ATCC BAA-621 / DSM 15236 / T118) (Rhodoferax ferrireducens).